Here is a 339-residue protein sequence, read N- to C-terminus: Dihydroorotase (339 aa).

Zn(2+)-binding residues include His12 and His14. Residues 14-16 and Asn40 each bind substrate; that span reads HVR. The Zn(2+) site is built by Lys94, His133, His167, and Asp239. Position 94 is an N6-carboxylysine (Lys94). His133 is a binding site for substrate. Asp239 is an active-site residue. Residues His243 and Ala255 each coordinate substrate.

Belongs to the metallo-dependent hydrolases superfamily. DHOase family. Class II DHOase subfamily. As to quaternary structure, homodimer. Zn(2+) serves as cofactor.

It carries out the reaction (S)-dihydroorotate + H2O = N-carbamoyl-L-aspartate + H(+). It functions in the pathway pyrimidine metabolism; UMP biosynthesis via de novo pathway; (S)-dihydroorotate from bicarbonate: step 3/3. Functionally, catalyzes the reversible cyclization of carbamoyl aspartate to dihydroorotate. In Helicobacter pylori (strain P12), this protein is Dihydroorotase.